The sequence spans 115 residues: Immunoglobulin kappa chain variable 12-41 (115 aa).

The first 20 residues, 1 to 20, serve as a signal peptide directing secretion; that stretch reads MSVLTQVLALLLLWLTGARC. Positions 21-43 are framework-1; it reads DIQMTQSPASLSASVGETVTITC. Cysteines 43 and 108 form a disulfide. Positions 44–54 are complementarity-determining-1; it reads RASGNIHNYLA. The segment at 55 to 69 is framework-2; sequence WYQQKQGKSPQLLVY. Residues 70–76 form a complementarity-determining-2 region; it reads NAKTLAD. Residues 77 to 108 form a framework-3 region; that stretch reads GVPSRFSGSGSGTQYSLKINSLQPEDFGSYYC. A complementarity-determining-3 region spans residues 109–115; the sequence is QHFWSTP.

In Mus musculus (Mouse), this protein is Immunoglobulin kappa chain variable 12-41.